The following is a 128-amino-acid chain: uncharacterized protein (128 aa).

This is an uncharacterized protein from Methanocaldococcus jannaschii (strain ATCC 43067 / DSM 2661 / JAL-1 / JCM 10045 / NBRC 100440) (Methanococcus jannaschii).